Consider the following 215-residue polypeptide: UPF0502 protein YceH (215 aa).

Lysine 80 carries the post-translational modification N6-acetyllysine.

It belongs to the UPF0502 family.

The polypeptide is UPF0502 protein YceH (Escherichia coli O7:K1 (strain IAI39 / ExPEC)).